A 356-amino-acid chain; its full sequence is 3-dehydroquinate synthase (356 aa).

NAD(+) contacts are provided by residues 106–110 (GVVGD), 130–131 (TS), lysine 143, lysine 152, and 170–173 (FLKT). Positions 185, 246, and 263 each coordinate Zn(2+).

This sequence belongs to the sugar phosphate cyclases superfamily. Dehydroquinate synthase family. The cofactor is NAD(+). It depends on Co(2+) as a cofactor. Requires Zn(2+) as cofactor.

It localises to the cytoplasm. The enzyme catalyses 7-phospho-2-dehydro-3-deoxy-D-arabino-heptonate = 3-dehydroquinate + phosphate. The protein operates within metabolic intermediate biosynthesis; chorismate biosynthesis; chorismate from D-erythrose 4-phosphate and phosphoenolpyruvate: step 2/7. Functionally, catalyzes the conversion of 3-deoxy-D-arabino-heptulosonate 7-phosphate (DAHP) to dehydroquinate (DHQ). The sequence is that of 3-dehydroquinate synthase from Clostridium acetobutylicum (strain ATCC 824 / DSM 792 / JCM 1419 / IAM 19013 / LMG 5710 / NBRC 13948 / NRRL B-527 / VKM B-1787 / 2291 / W).